The chain runs to 320 residues: ATP-dependent 6-phosphofructokinase (320 aa).

G12 serves as a coordination point for ATP. ADP contacts are provided by residues 22–26 and 55–60; these read RGVVR and RYSVSD. Residues 73–74 and 103–106 each bind ATP; these read RF and GDGS. D104 lines the Mg(2+) pocket. 126 to 128 is a binding site for substrate; the sequence is TID. D128 acts as the Proton acceptor in catalysis. Residue R155 participates in ADP binding. Residues R163 and 170-172 each bind substrate; that span reads MGR. Residues 186-188, K212, and 214-216 contribute to the ADP site; these read GCE and KKH. Substrate is bound by residues E223, R244, and 250–253; that span reads HIQR.

Belongs to the phosphofructokinase type A (PFKA) family. ATP-dependent PFK group I subfamily. Prokaryotic clade 'B1' sub-subfamily. As to quaternary structure, homotetramer. It depends on Mg(2+) as a cofactor.

The protein localises to the cytoplasm. It catalyses the reaction beta-D-fructose 6-phosphate + ATP = beta-D-fructose 1,6-bisphosphate + ADP + H(+). Its pathway is carbohydrate degradation; glycolysis; D-glyceraldehyde 3-phosphate and glycerone phosphate from D-glucose: step 3/4. Allosterically activated by ADP and other diphosphonucleosides, and allosterically inhibited by phosphoenolpyruvate. Functionally, catalyzes the phosphorylation of D-fructose 6-phosphate to fructose 1,6-bisphosphate by ATP, the first committing step of glycolysis. The protein is ATP-dependent 6-phosphofructokinase of Citrobacter koseri (strain ATCC BAA-895 / CDC 4225-83 / SGSC4696).